The chain runs to 478 residues: ATP synthase subunit beta (478 aa).

151–158 (GGAGVGKT) contacts ATP.

Belongs to the ATPase alpha/beta chains family. As to quaternary structure, F-type ATPases have 2 components, CF(1) - the catalytic core - and CF(0) - the membrane proton channel. CF(1) has five subunits: alpha(3), beta(3), gamma(1), delta(1), epsilon(1). CF(0) has three main subunits: a(1), b(2) and c(9-12). The alpha and beta chains form an alternating ring which encloses part of the gamma chain. CF(1) is attached to CF(0) by a central stalk formed by the gamma and epsilon chains, while a peripheral stalk is formed by the delta and b chains.

It localises to the cell inner membrane. The catalysed reaction is ATP + H2O + 4 H(+)(in) = ADP + phosphate + 5 H(+)(out). Its function is as follows. Produces ATP from ADP in the presence of a proton gradient across the membrane. The catalytic sites are hosted primarily by the beta subunits. The protein is ATP synthase subunit beta of Xanthobacter autotrophicus (strain ATCC BAA-1158 / Py2).